A 579-amino-acid polypeptide reads, in one-letter code: MFS-type transporter olcL (579 aa).

Residues 1 to 24 are compositionally biased toward polar residues; it reads MANIGGSNAVSSAQGSQISDSPTT. Residues 1-75 are disordered; that stretch reads MANIGGSNAV…GFGEDGCQSD (75 aa). Positions 25–35 are enriched in basic and acidic residues; sequence VDDRLDEHKET. Polar residues predominate over residues 36–54; the sequence is STQSIDHSENITQSPTSLQ. Asn45 carries N-linked (GlcNAc...) asparagine glycosylation. 9 consecutive transmembrane segments (helical) span residues 85–105, 121–141, 159–179, 183–203, 214–234, 241–261, 282–302, 310–330, and 355–375; these read LAAIMIGVCLAVFSMALDNTI, GDVGWYGSVYPLTNCCLTLVF, AVFEIGSLICGATPSSLGLII, IAGLGSSGIYLGSMIILSQSV, LVGGLYGVAGVAGPLLGGAFT, WCFYINPLFGAVTALFILLFF, LIGLFFFLPGMISLLLALQWG, SGRIIGLFVCSICLLSIFIMV, and LFNFCITGSFLVFSYYLPVWF. An N-linked (GlcNAc...) asparagine glycan is attached at Asn380. 5 consecutive transmembrane segments (helical) span residues 388-408, 411-431, 439-459, 479-501, and 553-573; these read LMNLPMLLGVILCSIISGYGV, IGYYTPFMYAAPIVSAIGAGL, FGPSQWIGYQALYGIGLGLGL, IAIVTFIQSLGGSVSVSIAQNVF, and FYVGAAFSVLAMIGALPIQWI.

The protein belongs to the major facilitator superfamily. TCR/Tet family.

It localises to the peroxisome membrane. Its function is as follows. MFS-type transporter; part of the gene cluster that mediates the biosynthesis of 15-deoxyoxalicine B. The first step of the pathway is the synthesis of nicotinyl-CoA from nicotinic acid by the nicotinic acid-CoA ligase olcI. Nicotinyl-CoA is then a substrate of polyketide synthase olcA to produce 4-hydroxy-6-(3-pyridinyl)-2H-pyran-2-one (HPPO) which is further prenylated by the polyprenyl transferase olcH to yield geranylgeranyl-HPPO. Geranylgeranyl pyrophosphate is provided by the cluster-specific geranylgeranyl pyrophosphate synthase olcC. The FAD-dependent monooxygenase olcE catalyzes the epoxidation of geranylgeranyl-HPPO and the terpene cyclase olcD catalyzes the cyclization of the terpenoid component, resulting in the formation of the tricyclic terpene moiety seen in predecaturin E. The cytochrome P450 monooxygenase then catalyzes the allylic oxidation of predecaturin E, which is followed by spirocylization with concomitant loss of one molecule of water to form decaturin E. Decaturin E is the substrate of the cytochrome P450 monooxygenase olcJ which hydroxylates it at the C-29 position to form decaturin F. The short-chain dehydrogenase/reductase olcF may catalyze the oxidation of decaturin F to generate the 29-hydroxyl-27-one intermediate, and subsequent hemiacetal formation probably leads to the formation of decaturin C. The dioxygenase olcK may be a peroxisomal enzyme that catalyzes the hydroxylation of decaturin C into decaturin A once decaturin C is shuttled into the peroxisome by the MFS transporter olcL. Finally the cytochrome P450 monooxygenase olcB catalyzes the oxidative rearrangement to yield 15-deoxyoxalicine B. In the absence of olcJ, decaturin E may be shunted to a pathway in which it is oxidized to a ketone, possibly by olcF, to form decaturin D, which undergoes further allylic oxidation to yield decaturin G. Moreover, in the absence of oclK or oclL, oclB can convert decaturin C into 15-deoxyoxalicine A. The chain is MFS-type transporter olcL from Penicillium canescens.